A 1989-amino-acid polypeptide reads, in one-letter code: Exophilin-5 (1989 aa).

One can recognise a RabBD domain in the interval 7-63 (AFDFSFLNDEEARKILQVLERNEELQRAEKDRISKLQKTKRDIRWLQGVTGEWFEEI). Disordered stretches follow at residues 93-117 (NDPI…PFSS) and 348-391 (TQSK…FLRA). 2 stretches are compositionally biased toward polar residues: residues 100–111 (TSRSKNVTNQKK) and 359–376 (HQQS…WNRS). Basic and acidic residues predominate over residues 377–389 (DSSRDRENQEEFL). Ser603 carries the phosphoserine modification. 3 disordered regions span residues 631–651 (FSQI…NPTV), 806–827 (STAS…RTDQ), and 882–933 (AALP…NQKN). A compositionally biased stretch (polar residues) spans 641-651 (PQSPNLQNPTV). Ser806 and Ser809 each carry phosphoserine. The segment covering 891–909 (KNSSLDAPVVPSTTVFSRR) has biased composition (polar residues). The segment covering 910-927 (SPSDKDPSLGEREEKDNA) has biased composition (basic and acidic residues). Ser1028 and Ser1086 each carry phosphoserine. Disordered stretches follow at residues 1094–1113 (EATE…VRKG), 1124–1152 (SCPS…ASEL), and 1365–1493 (EIFS…TNCQ). Polar residues predominate over residues 1098–1110 (RMTNVKSSGSTSV). Ser1124 bears the Phosphoserine mark. The span at 1379-1390 (SENKKERGKKLQ) shows a compositional bias: basic and acidic residues. Positions 1416-1431 (SINSSNSGPSSLPALS) are enriched in low complexity. Residues 1434–1447 (NIGNSQTRRSSWEC) are compositionally biased toward polar residues. Ser1505 is subject to Phosphoserine. 2 disordered regions span residues 1521-1590 (EETQ…NRSS) and 1644-1737 (PEPT…PITF). Basic and acidic residues-rich tracts occupy residues 1551–1560 (ESRKAEDEMQ), 1573–1589 (NKNK…ENRS), and 1658–1670 (RLSE…KKSE). The segment covering 1685–1709 (THVSNQKSNSISQRHQNEFKNVSES) has biased composition (polar residues). Ser1753, Ser1768, Ser1821, and Ser1851 each carry phosphoserine. The disordered stretch occupies residues 1921–1989 (FLKDDLRNPP…LDENDKESEL (69 aa)). The span at 1933-1943 (SESLSSNSPSS) shows a compositional bias: low complexity. Acidic residues predominate over residues 1959–1989 (YEDDPVDSDCDTDTTTDDEYYLDENDKESEL).

As to quaternary structure, interacts with RAB27A. As to expression, expressed in keratinocytes.

In terms of biological role, may act as Rab effector protein and play a role in vesicle trafficking. The polypeptide is Exophilin-5 (Homo sapiens (Human)).